The chain runs to 338 residues: Ornithine carbamoyltransferase, catabolic (338 aa).

Carbamoyl phosphate-binding positions include 65–68 (STRT), Q92, R116, and 143–146 (HPTQ). L-ornithine-binding positions include N175, D239, and 243–244 (SM). Carbamoyl phosphate-binding positions include 280–281 (CL) and R325.

It belongs to the aspartate/ornithine carbamoyltransferase superfamily. OTCase family.

Its subcellular location is the cytoplasm. It carries out the reaction carbamoyl phosphate + L-ornithine = L-citrulline + phosphate + H(+). It participates in amino-acid degradation; L-arginine degradation via ADI pathway; carbamoyl phosphate from L-arginine: step 2/2. In terms of biological role, reversibly catalyzes the transfer of the carbamoyl group from carbamoyl phosphate (CP) to the N(epsilon) atom of ornithine (ORN) to produce L-citrulline. The sequence is that of Ornithine carbamoyltransferase, catabolic from Treponema denticola (strain ATCC 35405 / DSM 14222 / CIP 103919 / JCM 8153 / KCTC 15104).